The sequence spans 258 residues: NAD(P)H-hydrate epimerase (258 aa).

The YjeF N-terminal domain occupies 15-244 (AFQLDQELMS…RIAKEYGIED (230 aa)). 75–79 (NNGGD) lines the (6S)-NADPHX pocket. Positions 76 and 145 each coordinate K(+). Residues 149 to 155 (GFSFKPP) and Asp181 each bind (6S)-NADPHX. Ser184 is a binding site for K(+).

The protein belongs to the NnrE/AIBP family. Requires K(+) as cofactor.

The protein resides in the cytoplasm. The protein localises to the mitochondrion. It catalyses the reaction (6R)-NADHX = (6S)-NADHX. The catalysed reaction is (6R)-NADPHX = (6S)-NADPHX. Catalyzes the epimerization of the S- and R-forms of NAD(P)HX, a damaged form of NAD(P)H that is a result of enzymatic or heat-dependent hydration. This is a prerequisite for the S-specific NAD(P)H-hydrate dehydratase to allow the repair of both epimers of NAD(P)HX. The protein is NAD(P)H-hydrate epimerase of Candida albicans (strain WO-1) (Yeast).